The chain runs to 171 residues: Co-chaperone protein HscB homolog (171 aa).

Positions 2–74 (NHFELFGLPP…ISRAEYLLSQ (73 aa)) constitute a J domain.

This sequence belongs to the HscB family. As to quaternary structure, interacts with HscA and stimulates its ATPase activity.

Functionally, co-chaperone involved in the maturation of iron-sulfur cluster-containing proteins. Seems to help targeting proteins to be folded toward HscA. The chain is Co-chaperone protein HscB homolog from Vibrio vulnificus (strain YJ016).